The sequence spans 547 residues: Chaperonin GroEL (547 aa).

ATP contacts are provided by residues 30–33, lysine 51, 87–91, glycine 415, and aspartate 495; these read TLGP and DGTTT.

It belongs to the chaperonin (HSP60) family. Forms a cylinder of 14 subunits composed of two heptameric rings stacked back-to-back. Interacts with the co-chaperonin GroES.

It is found in the cytoplasm. It catalyses the reaction ATP + H2O + a folded polypeptide = ADP + phosphate + an unfolded polypeptide.. Functionally, together with its co-chaperonin GroES, plays an essential role in assisting protein folding. The GroEL-GroES system forms a nano-cage that allows encapsulation of the non-native substrate proteins and provides a physical environment optimized to promote and accelerate protein folding. This chain is Chaperonin GroEL, found in Thiobacillus denitrificans (strain ATCC 25259 / T1).